Consider the following 225-residue polypeptide: Uracil-DNA glycosylase 1 (225 aa).

The Proton acceptor role is filled by Asp68.

Belongs to the uracil-DNA glycosylase (UDG) superfamily. UNG family.

Its subcellular location is the cytoplasm. It carries out the reaction Hydrolyzes single-stranded DNA or mismatched double-stranded DNA and polynucleotides, releasing free uracil.. Functionally, excises uracil residues from the DNA which can arise as a result of misincorporation of dUMP residues by DNA polymerase or due to deamination of cytosine. The polypeptide is Uracil-DNA glycosylase 1 (ung1) (Streptomyces avermitilis (strain ATCC 31267 / DSM 46492 / JCM 5070 / NBRC 14893 / NCIMB 12804 / NRRL 8165 / MA-4680)).